The primary structure comprises 354 residues: Cysteine proteinase A (354 aa).

Positions 1–24 (MARRNPLLFAIVVTILFVVCYGSA) are cleaved as a signal peptide. The propeptide at 25–125 (LIAQTPPPVD…HKEDVHVDDS (101 aa)) is activation peptide. 3 cysteine pairs are disulfide-bonded: cysteine 150-cysteine 191, cysteine 184-cysteine 229, and cysteine 282-cysteine 330. Cysteine 153 is an active-site residue. A glycan (N-linked (GlcNAc...) asparagine) is linked at asparagine 208. Active-site residues include histidine 289 and asparagine 309.

Belongs to the peptidase C1 family.

This Leishmania mexicana protein is Cysteine proteinase A (LMCPA).